Consider the following 387-residue polypeptide: Pepsin A (387 aa).

Residues 1-16 (MKKLLLLLGLVALSEC) form the signal peptide. A propeptide spans 17–61 (LYKVPLVKKKSLRQNLIENGLLKDFLAKHNVNPASKYFPTEAATE) (activation peptide). The region spanning 75–384 (YFGTIGIGTP…DRGNNRVGLA (310 aa)) is the Peptidase A1 domain. Asp-93 is an active-site residue. An intrachain disulfide couples Cys-106 to Cys-111. Residue Ser-129 is modified to Phosphoserine. A disulfide bond links Cys-267 and Cys-271. The active site involves Asp-276. A disulfide bond links Cys-310 and Cys-343.

This sequence belongs to the peptidase A1 family.

It localises to the secreted. It carries out the reaction Preferential cleavage: hydrophobic, preferably aromatic, residues in P1 and P1' positions. Cleaves 1-Phe-|-Val-2, 4-Gln-|-His-5, 13-Glu-|-Ala-14, 14-Ala-|-Leu-15, 15-Leu-|-Tyr-16, 16-Tyr-|-Leu-17, 23-Gly-|-Phe-24, 24-Phe-|-Phe-25 and 25-Phe-|-Tyr-26 bonds in the B chain of insulin.. Its function is as follows. Shows particularly broad specificity; although bonds involving phenylalanine and leucine are preferred, many others are also cleaved to some extent. The chain is Pepsin A (PGA) from Suncus murinus (Asian house shrew).